We begin with the raw amino-acid sequence, 156 residues long: N-glycosidase Npun_R5314 (156 aa).

This sequence belongs to the YbiA family.

The enzyme catalyses 2,5-diamino-6-hydroxy-4-(5-phosphoribosylamino)-pyrimidine + H2O = 2,5,6-triamino-4-hydroxypyrimidine + D-ribose 5-phosphate. It catalyses the reaction 5-amino-6-(5-phospho-D-ribosylamino)uracil + H2O = 5,6-diaminouracil + D-ribose 5-phosphate. Its function is as follows. Catalyzes the hydrolysis of the N-glycosidic bond in the first two intermediates of riboflavin biosynthesis, which are highly reactive metabolites, yielding relatively innocuous products. Thus, can divert a surplus of harmful intermediates into relatively harmless products and pre-empt the damage these intermediates would otherwise do. May act on other substrates in vivo. Has no activity against GTP, nucleoside monophosphates or ADP-ribose. The polypeptide is N-glycosidase Npun_R5314 (Nostoc punctiforme (strain ATCC 29133 / PCC 73102)).